We begin with the raw amino-acid sequence, 73 residues long: Small ribosomal subunit protein bS18 (73 aa).

The protein belongs to the bacterial ribosomal protein bS18 family. Part of the 30S ribosomal subunit. Forms a tight heterodimer with protein bS6.

Its function is as follows. Binds as a heterodimer with protein bS6 to the central domain of the 16S rRNA, where it helps stabilize the platform of the 30S subunit. This Neorickettsia sennetsu (strain ATCC VR-367 / Miyayama) (Ehrlichia sennetsu) protein is Small ribosomal subunit protein bS18.